A 483-amino-acid polypeptide reads, in one-letter code: Glutamyl-tRNA(Gln) amidotransferase subunit A (483 aa).

Residues K76 and S151 each act as charge relay system in the active site. The Acyl-ester intermediate role is filled by S175.

It belongs to the amidase family. GatA subfamily. As to quaternary structure, heterotrimer of A, B and C subunits.

The catalysed reaction is L-glutamyl-tRNA(Gln) + L-glutamine + ATP + H2O = L-glutaminyl-tRNA(Gln) + L-glutamate + ADP + phosphate + H(+). Functionally, allows the formation of correctly charged Gln-tRNA(Gln) through the transamidation of misacylated Glu-tRNA(Gln) in organisms which lack glutaminyl-tRNA synthetase. The reaction takes place in the presence of glutamine and ATP through an activated gamma-phospho-Glu-tRNA(Gln). The protein is Glutamyl-tRNA(Gln) amidotransferase subunit A of Pseudomonas putida (strain ATCC 47054 / DSM 6125 / CFBP 8728 / NCIMB 11950 / KT2440).